We begin with the raw amino-acid sequence, 519 residues long: Protein nucleotidyltransferase YdiU (519 aa).

ATP contacts are provided by G101, G103, R104, K123, D135, G136, R193, and R200. The Proton acceptor role is filled by D271. Mg(2+) contacts are provided by N272 and D281. Residue D281 participates in ATP binding.

This sequence belongs to the SELO family. It depends on Mg(2+) as a cofactor. Requires Mn(2+) as cofactor.

It carries out the reaction L-seryl-[protein] + ATP = 3-O-(5'-adenylyl)-L-seryl-[protein] + diphosphate. The catalysed reaction is L-threonyl-[protein] + ATP = 3-O-(5'-adenylyl)-L-threonyl-[protein] + diphosphate. The enzyme catalyses L-tyrosyl-[protein] + ATP = O-(5'-adenylyl)-L-tyrosyl-[protein] + diphosphate. It catalyses the reaction L-histidyl-[protein] + UTP = N(tele)-(5'-uridylyl)-L-histidyl-[protein] + diphosphate. It carries out the reaction L-seryl-[protein] + UTP = O-(5'-uridylyl)-L-seryl-[protein] + diphosphate. The catalysed reaction is L-tyrosyl-[protein] + UTP = O-(5'-uridylyl)-L-tyrosyl-[protein] + diphosphate. Functionally, nucleotidyltransferase involved in the post-translational modification of proteins. It can catalyze the addition of adenosine monophosphate (AMP) or uridine monophosphate (UMP) to a protein, resulting in modifications known as AMPylation and UMPylation. This is Protein nucleotidyltransferase YdiU from Tolumonas auensis (strain DSM 9187 / NBRC 110442 / TA 4).